We begin with the raw amino-acid sequence, 442 residues long: Cell division protein FtsA (442 aa).

A disordered region spans residues 401-428; it reads VTSYDNDSYDAPEETVYDEPEQKKSDED. Acidic residues predominate over residues 407–419; that stretch reads DSYDAPEETVYDE.

This sequence belongs to the FtsA/MreB family. Self-interacts. Interacts with FtsZ.

It is found in the cell membrane. Cell division protein that is involved in the assembly of the Z ring. May serve as a membrane anchor for the Z ring. In Enterococcus hirae, this protein is Cell division protein FtsA.